The chain runs to 364 residues: Thymidine kinase (364 aa).

36–43 lines the ATP pocket; that stretch reads GPFGVGKT. The active-site Proton acceptor is the E64. Residue Q108 coordinates substrate. Position 201 (R201) interacts with ATP. Residue R207 coordinates substrate.

The protein belongs to the herpesviridae thymidine kinase family. As to quaternary structure, homodimer.

It catalyses the reaction thymidine + ATP = dTMP + ADP + H(+). Its function is as follows. Catalyzes the transfer of the gamma-phospho group of ATP to thymidine to generate dTMP in the salvage pathway of pyrimidine synthesis. The dTMP serves as a substrate for DNA polymerase during viral DNA replication. Allows the virus to be reactivated and to grow in non-proliferative cells lacking a high concentration of phosphorylated nucleic acid precursors. The chain is Thymidine kinase from Infectious laryngotracheitis virus (strain Thorne V882) (ILTV).